Consider the following 147-residue polypeptide: Bis(5'-nucleosyl)-tetraphosphatase [asymmetrical] (147 aa).

Residue Ala-2 is modified to N-acetylalanine. The 138-residue stretch at 2–139 folds into the Nudix hydrolase domain; that stretch reads ALRACGLIIF…EMKAALQEGH (138 aa). A Nudix box motif is present at residues 43 to 64; that stretch reads GHVEPGESDLETALRETQEEAG.

Belongs to the Nudix hydrolase family. A divalent metal cation is required as a cofactor.

The catalysed reaction is P(1),P(4)-bis(5'-guanosyl) tetraphosphate + H2O = GMP + GTP + 2 H(+). The enzyme catalyses a 5'-end CoA-ribonucleoside in mRNA + H2O = a 5'-end phospho-adenosine-phospho-ribonucleoside in mRNA + (R)-4'-phosphopantetheine + 2 H(+). It carries out the reaction a 5'-end FAD-phospho-ribonucleoside in mRNA + H2O = a 5'-end phospho-adenosine-phospho-ribonucleoside in mRNA + FMN + 2 H(+). Its function is as follows. Catalyzes the asymmetric hydrolysis of diadenosine 5',5'''-P1,P4-tetraphosphate (Ap4A) to yield AMP and ATP. Exhibits decapping activity towards FAD-capped RNAs and dpCoA-capped RNAs in vitro. The polypeptide is Bis(5'-nucleosyl)-tetraphosphatase [asymmetrical] (NUDT2) (Bos taurus (Bovine)).